Reading from the N-terminus, the 422-residue chain is Electron transfer flavoprotein subunit alpha (422 aa).

Positions Lys-61–Ser-80 are disordered. FAD-binding positions include Ser-329–Arg-330, Gln-343–Thr-347, Gly-360–His-367, and Asn-381.

It belongs to the ETF alpha-subunit/FixB family. As to quaternary structure, heterodimer of an alpha and a beta subunit. FAD serves as cofactor.

Functionally, participates in the electron transfer process during N,N-dimethylglycine (DMG) degradation to sarcosine. The protein is Electron transfer flavoprotein subunit alpha of Chromohalobacter salexigens (strain ATCC BAA-138 / DSM 3043 / CIP 106854 / NCIMB 13768 / 1H11).